A 365-amino-acid chain; its full sequence is Phenoloxidase-activating factor 1 (365 aa).

The signal sequence occupies residues 1-23 (MKQVHFFILWFFVLNLYSIKAQA). Residues 24–74 (GCRTPNGENARCVPINNCKILYDSVLTSDPEVIRFLRASQCGYNGQPLVCC) form the Clip domain. 8 cysteine pairs are disulfide-bonded: cysteine 25–cysteine 73, cysteine 35–cysteine 64, cysteine 41–cysteine 74, cysteine 101–cysteine 240, cysteine 140–cysteine 156, cysteine 184–cysteine 191, cysteine 284–cysteine 301, and cysteine 311–cysteine 340. The Peptidase S1 domain occupies 110–364 (ILNGDDTVPE…YRDWIEGNIR (255 aa)). Asparagine 131 carries N-linked (GlcNAc...) asparagine glycosylation. Catalysis depends on histidine 155, which acts as the Charge relay system. Glutamate 175, asparagine 177, threonine 180, and aspartate 183 together coordinate Ca(2+). Aspartate 220 serves as the catalytic Charge relay system. Residue serine 315 is the Charge relay system of the active site.

The protein belongs to the peptidase S1 family. CLIP subfamily. In terms of assembly, in the active form, heterodimer of a light chain and a heavy chain; disulfide-linked. Post-translationally, cleaved following the recognition of pathogen-derived products, probably by a lysyl endopeptidase.

It is found in the secreted. Protein stability and endopeptidase activity are calcium dependent. First cleavage on prophenoloxidase PPO1 and PPO2 is not dependent on calcium; however, cleavage of PPO1 and PPO2 to their active forms is dependent on calcium and on the presence of PPAF2 and PPAF3. Cleavage of PPAF2 is inhibited by calcium. Inhibited by ethylenediaminetetraacetic acid (EDTA), p-nitrophenyl-p'-guanido-benzoate, diisopropylphosphorofluoridate (iPr2PF) and p-(Amidinophenyl)methanesulfonyl fluoride (p-APMSF). Serine endopeptidase which, by cleaving prophenoloxidase PPO1 and PPO2, is required for the activation of the prophenoloxidase cascade probably following the recognition of pathogen-derived products. The chain is Phenoloxidase-activating factor 1 from Holotrichia diomphalia (Korean black chafer).